Reading from the N-terminus, the 410-residue chain is LL-diaminopimelate aminotransferase (410 aa).

The substrate site is built by Tyr-15 and Gly-42. Residues Tyr-72, 108–109 (SK), Tyr-132, Asn-187, Tyr-218, and 246–248 (SFS) contribute to the pyridoxal 5'-phosphate site. 3 residues coordinate substrate: Lys-109, Tyr-132, and Asn-187. Lys-249 is subject to N6-(pyridoxal phosphate)lysine. Pyridoxal 5'-phosphate contacts are provided by Arg-257 and Asn-292. Substrate-binding residues include Asn-292 and Arg-388.

This sequence belongs to the class-I pyridoxal-phosphate-dependent aminotransferase family. LL-diaminopimelate aminotransferase subfamily. Homodimer. Pyridoxal 5'-phosphate serves as cofactor.

It catalyses the reaction (2S,6S)-2,6-diaminopimelate + 2-oxoglutarate = (S)-2,3,4,5-tetrahydrodipicolinate + L-glutamate + H2O + H(+). The protein operates within amino-acid biosynthesis; L-lysine biosynthesis via DAP pathway; LL-2,6-diaminopimelate from (S)-tetrahydrodipicolinate (aminotransferase route): step 1/1. In terms of biological role, involved in the synthesis of meso-diaminopimelate (m-DAP or DL-DAP), required for both lysine and peptidoglycan biosynthesis. Catalyzes the direct conversion of tetrahydrodipicolinate to LL-diaminopimelate. This is LL-diaminopimelate aminotransferase from Geotalea daltonii (strain DSM 22248 / JCM 15807 / FRC-32) (Geobacter daltonii).